We begin with the raw amino-acid sequence, 103 residues long: Small ribosomal subunit protein uS10 (103 aa).

It belongs to the universal ribosomal protein uS10 family. In terms of assembly, part of the 30S ribosomal subunit.

In terms of biological role, involved in the binding of tRNA to the ribosomes. In Ralstonia pickettii (strain 12J), this protein is Small ribosomal subunit protein uS10.